A 346-amino-acid chain; its full sequence is tRNA N6-adenosine threonylcarbamoyltransferase (346 aa).

The Fe cation site is built by His111 and His115. Substrate is bound by residues 134–138 (LVSGG), Asp167, Gly180, and Asn279. A Fe cation-binding site is contributed by Asp307.

The protein belongs to the KAE1 / TsaD family. Fe(2+) is required as a cofactor.

The protein resides in the cytoplasm. The enzyme catalyses L-threonylcarbamoyladenylate + adenosine(37) in tRNA = N(6)-L-threonylcarbamoyladenosine(37) in tRNA + AMP + H(+). Required for the formation of a threonylcarbamoyl group on adenosine at position 37 (t(6)A37) in tRNAs that read codons beginning with adenine. Is involved in the transfer of the threonylcarbamoyl moiety of threonylcarbamoyl-AMP (TC-AMP) to the N6 group of A37, together with TsaE and TsaB. TsaD likely plays a direct catalytic role in this reaction. This Burkholderia multivorans (strain ATCC 17616 / 249) protein is tRNA N6-adenosine threonylcarbamoyltransferase.